We begin with the raw amino-acid sequence, 342 residues long: S-adenosylmethionine:tRNA ribosyltransferase-isomerase (342 aa).

Belongs to the QueA family. As to quaternary structure, monomer.

Its subcellular location is the cytoplasm. It carries out the reaction 7-aminomethyl-7-carbaguanosine(34) in tRNA + S-adenosyl-L-methionine = epoxyqueuosine(34) in tRNA + adenine + L-methionine + 2 H(+). Its pathway is tRNA modification; tRNA-queuosine biosynthesis. In terms of biological role, transfers and isomerizes the ribose moiety from AdoMet to the 7-aminomethyl group of 7-deazaguanine (preQ1-tRNA) to give epoxyqueuosine (oQ-tRNA). In Streptococcus sanguinis (strain SK36), this protein is S-adenosylmethionine:tRNA ribosyltransferase-isomerase.